We begin with the raw amino-acid sequence, 309 residues long: Taste receptor type 2 member 20 (309 aa).

The Extracellular segment spans residues 1 to 6 (MMSFLH). The helical transmembrane segment at 7 to 27 (IVFSILVVVAFILGNFANGFI) threads the bilayer. The Cytoplasmic segment spans residues 28-46 (ALINFIAWVKRQKISSADQ). Residues 47-67 (IIAALAVSRVGLLWVILLHWY) traverse the membrane as a helical segment. Residues 68-79 (STVLNPTSSNLK) lie on the Extracellular side of the membrane. A helical membrane pass occupies residues 80-100 (VIIFISNAWAVTNHFSIWLAT). The Cytoplasmic portion of the chain corresponds to 101-125 (SLSIFYLLKIVNFSRLIFHHLKRKA). Residues 126 to 146 (KSVVLVIVLGSLFFLVCHLVM) traverse the membrane as a helical segment. Residues 147 to 178 (KNTYINVWTEECEGNVTWKIKLRNAMHLSNLT) are Extracellular-facing. A helical membrane pass occupies residues 179 to 199 (VAMLANLIPFTLTLISFLLLI). Residues 200-229 (YSLCKHLKKMQLHGKGSQDPSTKIHIKALQ) are Cytoplasmic-facing. Residues 230-250 (TVTSFLILLAIYFLCLITSFW) form a helical membrane-spanning segment. Topologically, residues 251-259 (NSKMRPKEI) are extracellular. Residues 260–280 (VLMLCQAFGIIYPSFHSFILI) form a helical membrane-spanning segment. Residues 281 to 309 (WGNKTLKQTFLSVLWQVTCWAKGQNQSTP) lie on the Cytoplasmic side of the membrane.

This sequence belongs to the G-protein coupled receptor T2R family.

The protein localises to the membrane. Functionally, receptor that may play a role in the perception of bitterness and is gustducin-linked. May play a role in sensing the chemical composition of the gastrointestinal content. The activity of this receptor may stimulate alpha gustducin, mediate PLC-beta-2 activation and lead to the gating of TRPM5. The polypeptide is Taste receptor type 2 member 20 (TAS2R20) (Pan paniscus (Pygmy chimpanzee)).